The chain runs to 48 residues: ATP synthase protein 8 (48 aa).

A helical transmembrane segment spans residues 13-33; that stretch reads LTYGFLLLIILLVLFSQFLLP.

Belongs to the ATPase protein 8 family. F-type ATPases have 2 components, CF(1) - the catalytic core - and CF(0) - the membrane proton channel.

Its subcellular location is the mitochondrion membrane. In terms of biological role, mitochondrial membrane ATP synthase (F(1)F(0) ATP synthase or Complex V) produces ATP from ADP in the presence of a proton gradient across the membrane which is generated by electron transport complexes of the respiratory chain. F-type ATPases consist of two structural domains, F(1) - containing the extramembraneous catalytic core and F(0) - containing the membrane proton channel, linked together by a central stalk and a peripheral stalk. During catalysis, ATP synthesis in the catalytic domain of F(1) is coupled via a rotary mechanism of the central stalk subunits to proton translocation. Part of the complex F(0) domain. Minor subunit located with subunit a in the membrane. In Wickerhamomyces canadensis (Yeast), this protein is ATP synthase protein 8 (ATP8).